The sequence spans 272 residues: HMP-PP phosphatase (272 aa).

Asp8 functions as the Nucleophile in the catalytic mechanism. Residues Asp8, Asp10, and Asp212 each contribute to the Mg(2+) site.

Belongs to the HAD-like hydrolase superfamily. Cof family. Mg(2+) serves as cofactor.

The catalysed reaction is 4-amino-2-methyl-5-(diphosphooxymethyl)pyrimidine + H2O = 4-amino-2-methyl-5-(phosphooxymethyl)pyrimidine + phosphate + H(+). Catalyzes the hydrolysis of 4-amino-2-methyl-5-hydroxymethylpyrimidine pyrophosphate (HMP-PP) to 4-amino-2-methyl-5-hydroxymethylpyrimidine phosphate (HMP-P). The protein is HMP-PP phosphatase of Escherichia coli O81 (strain ED1a).